Here is a 294-residue protein sequence, read N- to C-terminus: uncharacterized protein (294 aa).

Active-site charge relay system residues include threonine 43 and tyrosine 104. Tyrosine 130 serves as the catalytic Proton donor. Lysine 158 (schiff-base intermediate with substrate) is an active-site residue.

The protein belongs to the DapA family. In terms of assembly, homotetramer.

Its subcellular location is the cytoplasm. This is an uncharacterized protein from Pyrococcus abyssi (strain GE5 / Orsay).